A 367-amino-acid chain; its full sequence is Glycolate oxidase 3 (367 aa).

One can recognise an FMN hydroxy acid dehydrogenase domain in the interval 1–360 (MELITNVSEY…TRNHVITDSD (360 aa)). Residue Tyr25 participates in glyoxylate binding. Residues 78 to 80 (PSA), Ser107, 128 to 130 (QLY), and Thr156 contribute to the FMN site. Tyr130 is a binding site for glyoxylate. Arg165 lines the glyoxylate pocket. The FMN site is built by Lys231 and Ser253. Residues His255 and Arg258 each contribute to the glyoxylate site. The active-site Proton acceptor is the His255. Residues 286-290 (DGGVR) and 309-310 (GR) each bind FMN. A Microbody targeting signal motif is present at residues 365 to 367 (SRL).

It belongs to the FMN-dependent alpha-hydroxy acid dehydrogenase family. Homotetramer. Requires FMN as cofactor.

Its subcellular location is the peroxisome. The enzyme catalyses glycolate + O2 = glyoxylate + H2O2. It functions in the pathway photosynthesis; photorespiration; glycine from 2-phosphoglycolate: step 2/3. In terms of biological role, catalyzes the oxidation of glycolate to glyoxylate, with a reduction of O2 to H2O2. Is a key enzyme in photorespiration in green plants. This is Glycolate oxidase 3 (GLO3) from Oryza sativa subsp. indica (Rice).